We begin with the raw amino-acid sequence, 351 residues long: Transmembrane protein 255A (351 aa).

4 helical membrane-spanning segments follow: residues 30 to 50 (IYVT…GLAA), 57 to 77 (VTVG…LGII), 89 to 109 (LVAS…CAIV), and 226 to 246 (TILN…LGGF). The tract at residues 302 to 331 (FPSSPPSGLSDEQEPQSPSPSPSYMWSSSA) is disordered.

This sequence belongs to the TMEM255 family.

The protein localises to the membrane. The polypeptide is Transmembrane protein 255A (Tmem255a) (Mus musculus (Mouse)).